A 312-amino-acid chain; its full sequence is tRNA dimethylallyltransferase (312 aa).

11–18 contributes to the ATP binding site; it reads GLTATGKT. 13-18 contacts substrate; sequence TATGKT. An interaction with substrate tRNA region spans residues 36–39; that stretch reads DSMC.

The protein belongs to the IPP transferase family. In terms of assembly, monomer. It depends on Mg(2+) as a cofactor.

It catalyses the reaction adenosine(37) in tRNA + dimethylallyl diphosphate = N(6)-dimethylallyladenosine(37) in tRNA + diphosphate. Catalyzes the transfer of a dimethylallyl group onto the adenine at position 37 in tRNAs that read codons beginning with uridine, leading to the formation of N6-(dimethylallyl)adenosine (i(6)A). The chain is tRNA dimethylallyltransferase from Caldicellulosiruptor bescii (strain ATCC BAA-1888 / DSM 6725 / KCTC 15123 / Z-1320) (Anaerocellum thermophilum).